The sequence spans 867 residues: Piwi-like protein 1 (867 aa).

Basic residues predominate over residues 1–11 (MTGRARARARG). A disordered region spans residues 1 to 70 (MTGRARARAR…QRGPQDAPKT (70 aa)). Positions 28-44 (AQKTLPSHPSEQRQSLQ) are enriched in polar residues. The region spanning 286 to 397 (TVLDFMYSLY…LIPELCYLTG (112 aa)) is the PAZ domain. The interval 324-326 (TYR) is required for binding 2'-O-methylated 3'-end of piRNAs. Residues 485–621 (SRETRVAPLI…LQMNCKMGGE (137 aa)) form an MID region region. Residues 561–853 (IVVCILSSTR…LAFLVGQSIH (293 aa)) form the Piwi domain. Residues Asp638, Glu676, Asp708, and His842 contribute to the active site.

The protein belongs to the argonaute family. Piwi subfamily. The cofactor is Mg(2+). Post-translationally, methylated on arginine residues; required for the interaction with Tudor domain-containing protein and subsequent localization to the meiotic nuage, also named P granule.

It localises to the cytoplasm. In terms of biological role, endoribonuclease that plays a central role in postnatal germ cells by repressing transposable elements and preventing their mobilization, which is essential for the germline integrity. Acts via the piRNA metabolic process, which mediates the repression of transposable elements during meiosis by forming complexes composed of piRNAs and Piwi proteins and govern the methylation and subsequent repression of transposons. Directly binds methylated piRNAs, a class of 24 to 30 nucleotide RNAs that are generated by a Dicer-independent mechanism and are primarily derived from transposons and other repeated sequence elements. Strongly prefers a uridine in the first position of their guide (g1U preference, also named 1U-bias). Besides their function in transposable elements repression, piRNAs are probably involved in other processes during meiosis such as translation regulation. Not involved in the piRNA amplification loop, also named ping-pong amplification cycle. Acts as an endoribonuclease that cleaves transposon messenger RNAs. In Gallus gallus (Chicken), this protein is Piwi-like protein 1 (PIWIL1).